The following is a 473-amino-acid chain: Glutamate--tRNA ligase (473 aa).

Positions 11-21 (PSPTGFLHIGG) match the 'HIGH' region motif. A 'KMSKS' region motif is present at residues 240–244 (KLSKR). An ATP-binding site is contributed by Lys-243.

It belongs to the class-I aminoacyl-tRNA synthetase family. Glutamate--tRNA ligase type 1 subfamily. Monomer.

It localises to the cytoplasm. The enzyme catalyses tRNA(Glu) + L-glutamate + ATP = L-glutamyl-tRNA(Glu) + AMP + diphosphate. Functionally, catalyzes the attachment of glutamate to tRNA(Glu) in a two-step reaction: glutamate is first activated by ATP to form Glu-AMP and then transferred to the acceptor end of tRNA(Glu). In Rhodopseudomonas palustris (strain BisB5), this protein is Glutamate--tRNA ligase.